A 640-amino-acid polypeptide reads, in one-letter code: Putative GTPase-activating protein C1620.12c (640 aa).

Positions 96–120 (QPLQGHSPVPSFMSTASTNISSSKI) are disordered. Residues 109–120 (STASTNISSSKI) show a composition bias toward low complexity. A Rab-GAP TBC domain is found at 215-408 (CIPSPCRKLV…RLMDLIAIYG (194 aa)). Residues 500-636 (RQNNLEELKN…LQTKWKSVSE (137 aa)) are a coiled coil.

It belongs to the GYP5 family.

It is found in the nucleus. The protein resides in the cytoplasm. This is Putative GTPase-activating protein C1620.12c from Schizosaccharomyces pombe (strain 972 / ATCC 24843) (Fission yeast).